The chain runs to 139 residues: Probable disulfide formation protein C 1 (139 aa).

The helical transmembrane segment at 8–27 threads the bilayer; sequence EYALFTAWGASFIATLGSLY. Cysteine 37 and cysteine 40 are disulfide-bonded. Transmembrane regions (helical) follow at residues 42–61 and 68–85; these read YQRIFMYPFVLWLGIAVVKK and YSLPIASIGACISLYHYA. A disulfide bond links cysteine 99 and cysteine 104. The helical transmembrane segment at 113–135 threads the bilayer; sequence GFVTIPFLALIGFITIAVCSFIV.

It belongs to the DsbB family. BdbC subfamily.

Its subcellular location is the cell membrane. In terms of biological role, required for disulfide bond formation in some proteins. The polypeptide is Probable disulfide formation protein C 1 (bdbC1) (Bacillus cereus (strain ATCC 10987 / NRS 248)).